The primary structure comprises 390 residues: Anhydro-N-acetylmuramic acid kinase (390 aa).

Residue 9–16 (GTSLDGID) coordinates ATP.

Belongs to the anhydro-N-acetylmuramic acid kinase family.

The enzyme catalyses 1,6-anhydro-N-acetyl-beta-muramate + ATP + H2O = N-acetyl-D-muramate 6-phosphate + ADP + H(+). The protein operates within amino-sugar metabolism; 1,6-anhydro-N-acetylmuramate degradation. Its pathway is cell wall biogenesis; peptidoglycan recycling. In terms of biological role, catalyzes the specific phosphorylation of 1,6-anhydro-N-acetylmuramic acid (anhMurNAc) with the simultaneous cleavage of the 1,6-anhydro ring, generating MurNAc-6-P. Is required for the utilization of anhMurNAc either imported from the medium or derived from its own cell wall murein, and thus plays a role in cell wall recycling. The protein is Anhydro-N-acetylmuramic acid kinase of Bacillus cereus (strain B4264).